We begin with the raw amino-acid sequence, 262 residues long: Hydroxyethylthiazole kinase (262 aa).

Methionine 50 provides a ligand contact to substrate. The ATP site is built by arginine 125 and threonine 171. Glycine 198 lines the substrate pocket.

Belongs to the Thz kinase family. Mg(2+) is required as a cofactor.

The enzyme catalyses 5-(2-hydroxyethyl)-4-methylthiazole + ATP = 4-methyl-5-(2-phosphooxyethyl)-thiazole + ADP + H(+). Its pathway is cofactor biosynthesis; thiamine diphosphate biosynthesis; 4-methyl-5-(2-phosphoethyl)-thiazole from 5-(2-hydroxyethyl)-4-methylthiazole: step 1/1. Catalyzes the phosphorylation of the hydroxyl group of 4-methyl-5-beta-hydroxyethylthiazole (THZ). The protein is Hydroxyethylthiazole kinase of Escherichia coli O7:K1 (strain IAI39 / ExPEC).